The chain runs to 281 residues: Ribosomal RNA large subunit methyltransferase J (281 aa).

S-adenosyl-L-methionine-binding positions include His19, His42, Ser101, Glu119, 144–145 (NG), and Asp165. The Proton acceptor role is filled by Asp165.

The protein belongs to the RlmJ family. As to quaternary structure, monomer.

The catalysed reaction is adenosine(2030) in 23S rRNA + S-adenosyl-L-methionine = N(6)-methyladenosine(2030) in 23S rRNA + S-adenosyl-L-homocysteine + H(+). Specifically methylates the adenine in position 2030 of 23S rRNA. This Haemophilus influenzae (strain ATCC 51907 / DSM 11121 / KW20 / Rd) protein is Ribosomal RNA large subunit methyltransferase J.